We begin with the raw amino-acid sequence, 510 residues long: NAD(P)H-quinone oxidoreductase subunit 2, chloroplastic (510 aa).

The next 13 membrane-spanning stretches (helical) occupy residues L24–L44, W59–W79, I99–I119, M124–C144, X149–Y169, Y183–G203, I229–F249, W295–I315, M323–D343, G347–A367, A395–F415, L418–L438, and M484–I504.

It belongs to the complex I subunit 2 family. NDH is composed of at least 16 different subunits, 5 of which are encoded in the nucleus.

The protein localises to the plastid. It localises to the chloroplast thylakoid membrane. The catalysed reaction is a plastoquinone + NADH + (n+1) H(+)(in) = a plastoquinol + NAD(+) + n H(+)(out). It carries out the reaction a plastoquinone + NADPH + (n+1) H(+)(in) = a plastoquinol + NADP(+) + n H(+)(out). Its function is as follows. NDH shuttles electrons from NAD(P)H:plastoquinone, via FMN and iron-sulfur (Fe-S) centers, to quinones in the photosynthetic chain and possibly in a chloroplast respiratory chain. The immediate electron acceptor for the enzyme in this species is believed to be plastoquinone. Couples the redox reaction to proton translocation, and thus conserves the redox energy in a proton gradient. The sequence is that of NAD(P)H-quinone oxidoreductase subunit 2, chloroplastic from Narcissus elegans (Daffodil).